The chain runs to 352 residues: MDPVPDLPESQGSFQELWETVSYPPLETLSLPTVNEPTGSWVATGDMFLLDQDLSGTFDDKIFDIPIEPVPTNEVNPPPTTVPVTTDYPGSYELELRFQKSGTAKSVTSTYSETLNKLYCQLAKTSPIEVRVSKEPPKGAILRATAVYKKTEHVADVVRRCPHHQNEDSVEHRSHLIRVEGSQLAQYFEDPYTKRQSVTVPYEPPQPGSEMTTILLSYMCNSSCMGGMNRRPILTILTLETEGLVLGRRCFEVRICACPGRDRKTEEESRQKTQPKKRKVTPNTSSSKRKKSHSSGEEEDNREVFHFEVYGRERYEFLKKINDGLELLEKESKSKNKDSGMVPSSGKKLKSN.

The interval 1–48 (MDPVPDLPESQGSFQELWETVSYPPLETLSLPTVNEPTGSWVATGDMF) is transcription activation (acidic). A DNA-binding region spans residues 87-273 (DYPGSYELEL…KTEEESRQKT (187 aa)). Positions 161, 164, 220, and 224 each coordinate Zn(2+). The segment at 254-261 (RICACPGR) is interaction with DNA. A compositionally biased stretch (basic and acidic residues) spans 262–271 (DRKTEEESRQ). The tract at residues 262 to 303 (DRKTEEESRQKTQPKKRKVTPNTSSSKRKKSHSSGEEEDNRE) is disordered. Positions 276 to 291 (KKRKVTPNTSSSKRKK) match the Bipartite nuclear localization signal motif. Residues 302-331 (REVFHFEVYGRERYEFLKKINDGLELLEKE) are oligomerization. The short motif at 316 to 327 (EFLKKINDGLEL) is the Nuclear export signal element. The tract at residues 330 to 352 (KESKSKNKDSGMVPSSGKKLKSN) is disordered. The tract at residues 334 to 350 (SKNKDSGMVPSSGKKLK) is basic (repression of DNA-binding). Ser351 carries the post-translational modification Phosphoserine.

It belongs to the p53 family. In terms of assembly, binds DNA as a homotetramer. Requires Zn(2+) as cofactor.

It is found in the cytoplasm. Its subcellular location is the nucleus. Its function is as follows. Multifunctional transcription factor that induces cell cycle arrest, DNA repair or apoptosis upon binding to its target DNA sequence. Acts as a tumor suppressor in many tumor types; induces growth arrest or apoptosis depending on the physiological circumstances and cell type. Negatively regulates cell division by controlling expression of a set of genes required for this process. One of the activated genes is an inhibitor of cyclin-dependent kinases. Apoptosis induction seems to be mediated either by stimulation of BAX and FAS antigen expression, or by repression of Bcl-2 expression. This is Cellular tumor antigen p53 (tp53) from Oryzias latipes (Japanese rice fish).